The primary structure comprises 331 residues: Centriolar satellite-associated tubulin polyglutamylase complex regulator 1 (331 aa).

Residues 1 to 111 (MLSPERLALP…HCLLQLLCPD (111 aa)) are required for interaction with PCM1. A required for interaction with TPGS1, LRRC49, and TTLL1 region spans residues 1–225 (MLSPERLALP…SCPPPALVKE (225 aa)). Positions 112–331 (FPLELTQKAA…STEETDESET (220 aa)) are required for interaction with TPGS2. Residues 288-331 (SPEASCLPSRTPPRVGSPWRPLHHSRKVDGESDGSTEETDESET) form a disordered region. Acidic residues predominate over residues 318–331 (ESDGSTEETDESET). Serine 319 carries the post-translational modification Phosphoserine.

The protein belongs to the CSTPP1 family. Interacts with PCM1. Interacts with TTLL1, TPGS1, TPGS2 and LRRC49; the interactions link CSTPP1 to the complex TPGC. Binds to alpha-tubulin.

The protein localises to the cytoplasm. Its subcellular location is the cytoskeleton. The protein resides in the microtubule organizing center. It localises to the centrosome. It is found in the centriolar satellite. Regulator of the tubulin polyglutamylase complex (TPGC) that controls cytoskeletal organization, nuclear shape, and cilium disassembly by balancing microtubule and actin assembly. Regulates the assembly and stability of the TPGC and thereby modulates polyglutamylation of the microtubule, which antagonizes MAP4 binding. The protein is Centriolar satellite-associated tubulin polyglutamylase complex regulator 1 (CSTPP1) of Pongo abelii (Sumatran orangutan).